We begin with the raw amino-acid sequence, 330 residues long: Ketol-acid reductoisomerase (NADP(+)) (330 aa).

The KARI N-terminal Rossmann domain occupies 1–181 (MNVYYEQDAD…GGTKAGVIET (181 aa)). NADP(+) contacts are provided by residues 24–27 (YGSQ), Arg-47, Ser-50, Ser-52, and 82–85 (DQTQ). Residue His-107 is part of the active site. Gly-133 lines the NADP(+) pocket. Positions 182–327 (NFKDETETDL…AKLRNMMSWL (146 aa)) constitute a KARI C-terminal knotted domain. Residues Asp-190, Glu-194, Glu-226, and Glu-230 each coordinate Mg(2+). Ser-251 provides a ligand contact to substrate.

The protein belongs to the ketol-acid reductoisomerase family. Requires Mg(2+) as cofactor.

It carries out the reaction (2R)-2,3-dihydroxy-3-methylbutanoate + NADP(+) = (2S)-2-acetolactate + NADPH + H(+). The catalysed reaction is (2R,3R)-2,3-dihydroxy-3-methylpentanoate + NADP(+) = (S)-2-ethyl-2-hydroxy-3-oxobutanoate + NADPH + H(+). It participates in amino-acid biosynthesis; L-isoleucine biosynthesis; L-isoleucine from 2-oxobutanoate: step 2/4. Its pathway is amino-acid biosynthesis; L-valine biosynthesis; L-valine from pyruvate: step 2/4. In terms of biological role, involved in the biosynthesis of branched-chain amino acids (BCAA). Catalyzes an alkyl-migration followed by a ketol-acid reduction of (S)-2-acetolactate (S2AL) to yield (R)-2,3-dihydroxy-isovalerate. In the isomerase reaction, S2AL is rearranged via a Mg-dependent methyl migration to produce 3-hydroxy-3-methyl-2-ketobutyrate (HMKB). In the reductase reaction, this 2-ketoacid undergoes a metal-dependent reduction by NADPH to yield (R)-2,3-dihydroxy-isovalerate. The chain is Ketol-acid reductoisomerase (NADP(+)) from Chlorobium luteolum (strain DSM 273 / BCRC 81028 / 2530) (Pelodictyon luteolum).